The following is a 1287-amino-acid chain: DENN domain-containing protein 5A (1287 aa).

The 203-residue stretch at 57–259 folds into the uDENN domain; sequence STTEGENFEQ…EVPLPPPGRS (203 aa). At S193 the chain carries Phosphoserine. The 137-residue stretch at 278-414 folds into the cDENN domain; sequence ELPLFDFPVK…LEFVQEVSEI (137 aa). One can recognise a dDENN domain in the interval 416–598; it reads MAFGVPPEGN…IMCHDDDDKD (183 aa). The RUN 1 domain occupies 787 to 950; it reads VEENTLIASL…DYFCFTNVFT (164 aa). Residues 954-1062 form the PLAT domain; sequence IPYHILIVPS…DDGSLERVLV (109 aa). A Phosphothreonine modification is found at T1079. Phosphoserine is present on residues S1085, S1087, and S1096. An RUN 2 domain is found at 1134-1280; that stretch reads TLLLCGECGL…QEFNITLDTS (147 aa).

It belongs to the RAB6IP1 family. Interacts with RAB6A bound to GTP.

The protein resides in the golgi apparatus membrane. In terms of biological role, guanine nucleotide exchange factor (GEF) which may activate RAB6A and RAB39A and/or RAB39B. Promotes the exchange of GDP to GTP, converting inactive GDP-bound Rab proteins into their active GTP-bound form. Involved in the negative regulation of neurite outgrowth. The sequence is that of DENN domain-containing protein 5A (Dennd5a) from Mus musculus (Mouse).